A 204-amino-acid polypeptide reads, in one-letter code: Protein OPG030 (204 aa).

The BACK domain maps to 95–177 (FLRQYINNNI…ITYSELTNAI (83 aa)).

It belongs to the orthopoxvirus OPG030 family.

In Homo sapiens (Human), this protein is Protein OPG030 (OPG30).